The sequence spans 161 residues: Phosphopantetheine adenylyltransferase (161 aa).

Residue Ser-8 coordinates substrate. Residues 8-9 (SF) and His-16 each bind ATP. Substrate-binding positions include 36–40 (ENPRK), Leu-72, and Arg-86. ATP is bound by residues 87–89 (GLR), Glu-97, and 122–128 (FSFISSS). Glu-132 serves as a coordination point for substrate.

Belongs to the bacterial CoaD family. In terms of assembly, homohexamer. The cofactor is Mg(2+).

It localises to the cytoplasm. It carries out the reaction (R)-4'-phosphopantetheine + ATP + H(+) = 3'-dephospho-CoA + diphosphate. The protein operates within cofactor biosynthesis; coenzyme A biosynthesis; CoA from (R)-pantothenate: step 4/5. Reversibly transfers an adenylyl group from ATP to 4'-phosphopantetheine, yielding dephospho-CoA (dPCoA) and pyrophosphate. The sequence is that of Phosphopantetheine adenylyltransferase from Thermotoga maritima (strain ATCC 43589 / DSM 3109 / JCM 10099 / NBRC 100826 / MSB8).